The following is a 280-amino-acid chain: Orotidine 5'-phosphate decarboxylase (280 aa).

The Proton donor role is filled by Lys-97.

This sequence belongs to the OMP decarboxylase family. Type 2 subfamily.

The enzyme catalyses orotidine 5'-phosphate + H(+) = UMP + CO2. The protein operates within pyrimidine metabolism; UMP biosynthesis via de novo pathway; UMP from orotate: step 2/2. This chain is Orotidine 5'-phosphate decarboxylase (pyrF), found in Corynebacterium efficiens (strain DSM 44549 / YS-314 / AJ 12310 / JCM 11189 / NBRC 100395).